Here is a 320-residue protein sequence, read N- to C-terminus: Glutaminase (320 aa).

Substrate is bound by residues Ser-70, Asn-121, Glu-165, Asn-172, Tyr-196, Tyr-248, and Val-266.

Belongs to the glutaminase family. Homotetramer.

The catalysed reaction is L-glutamine + H2O = L-glutamate + NH4(+). The chain is Glutaminase from Mycobacterium marinum (strain ATCC BAA-535 / M).